The sequence spans 109 residues: MTYVVTDECVKCKYTDCVEVCPVDCFYEGEFMLVINPDECIDCGVCVPDCPIDAIKPESPELIEWVERAKDFIENHGWKNITKKKCALPGADKFKDEKDKFNKYIIKKT.

2 4Fe-4S ferredoxin-type domains span residues threonine 2–glutamate 30 and phenylalanine 31–proline 60. Cysteine 9 and cysteine 17 together coordinate [3Fe-4S] cluster. Residues cysteine 21, cysteine 40, cysteine 43, and cysteine 46 each coordinate [4Fe-4S] cluster. Position 50 (cysteine 50) interacts with [3Fe-4S] cluster.

[4Fe-4S] cluster serves as cofactor. It depends on [3Fe-4S] cluster as a cofactor.

Ferredoxins are iron-sulfur proteins that transfer electrons in a wide variety of metabolic reactions. In Rickettsia prowazekii (strain Madrid E), this protein is Ferredoxin (fdxA).